A 446-amino-acid chain; its full sequence is Alpha-1,6-mannosyl-glycoprotein 2-beta-N-acetylglucosaminyltransferase (446 aa).

The Cytoplasmic portion of the chain corresponds to 1-9 (MRFRIYKRK). The chain crosses the membrane as a helical; Signal-anchor for type II membrane protein span at residues 10–29 (VLILTFVVAACGFVLWSSNG). Residues 30 to 446 (RQRKNEALAP…ELCKSYRRLQ (417 aa)) are Lumenal-facing. N-linked (GlcNAc...) asparagine glycans are attached at residues asparagine 69 and asparagine 86. Residues 123-127 (QVHNR) and aspartate 154 each bind substrate. The cysteines at positions 196 and 210 are disulfide-linked. 229-233 (QTKHH) contributes to the substrate binding site. Position 261 (aspartate 261) interacts with Mn(2+). Cysteine 283 and cysteine 286 are oxidised to a cystine. Arginine 298 serves as a coordination point for substrate. 3 disulfide bridges follow: cysteine 334-cysteine 357, cysteine 339-cysteine 439, and cysteine 378-cysteine 386. Histidine 374 is a binding site for Mn(2+).

This sequence belongs to the glycosyltransferase 16 (GT16) protein family. In terms of assembly, homodimer. Mn(2+) serves as cofactor.

It is found in the golgi apparatus membrane. It catalyses the reaction an N(4)-{beta-D-GlcNAc-(1-&gt;2)-alpha-D-Man-(1-&gt;3)-[alpha-D-Man-(1-&gt;6)]-beta-D-Man-(1-&gt;4)-beta-D-GlcNAc-(1-&gt;4)-beta-D-GlcNAc}-L-asparaginyl-[protein] + UDP-N-acetyl-alpha-D-glucosamine = N(4)-{beta-D-GlcNAc-(1-&gt;2)-alpha-D-Man-(1-&gt;3)-[beta-D-GlcNAc-(1-&gt;2)-alpha-D-Man-(1-&gt;6)]-beta-D-Man-(1-&gt;4)-beta-D-GlcNAc-(1-&gt;4)-beta-D-GlcNAc}-L-asparaginyl-[protein] + UDP + H(+). Its pathway is protein modification; protein glycosylation. Functionally, plays an essential role in protein N-glycosylation. Catalyzes the transfer of N-acetylglucosamine (GlcNAc) onto the free terminal mannose moiety in the core structure of the nascent N-linked glycan chain, giving rise to the second branch in complex glycans. This is Alpha-1,6-mannosyl-glycoprotein 2-beta-N-acetylglucosaminyltransferase (MGAT2) from Sus scrofa (Pig).